We begin with the raw amino-acid sequence, 82 residues long: Short neurotoxin OKI-10 (82 aa).

A signal peptide spans 1-20; that stretch reads KTLLLTLVVVTIVCLDLGYT. 4 disulfides stabilise this stretch: Cys23-Cys44, Cys37-Cys61, Cys63-Cys74, and Cys75-Cys80.

The protein belongs to the three-finger toxin family. Short-chain subfamily. Type I alpha-neurotoxin sub-subfamily. As to expression, expressed by the venom gland.

The protein resides in the secreted. In terms of biological role, binds to muscle nicotinic acetylcholine receptor (nAChR) and inhibit acetylcholine from binding to the receptor, thereby impairing neuromuscular transmission. This is Short neurotoxin OKI-10 from Laticauda laticaudata (Blue-ringed sea krait).